The primary structure comprises 479 residues: CBL-interacting serine/threonine-protein kinase 10 (479 aa).

The Protein kinase domain maps to 12-266; sequence YDVGRLLGQG…IARIRESSWF (255 aa). Residues 18–26 and Lys-41 each bind ATP; that span reads LGQGTFAKV. Asp-134 acts as the Proton acceptor in catalysis. The activation loop stretch occupies residues 152 to 181; the sequence is DFGLSALADCKRQDGLLHTTCGTPAYVAPE. The residue at position 156 (Ser-156) is a Phosphoserine. Position 170 is a phosphothreonine (Thr-170). The segment at 286 to 323 is disordered; the sequence is SVEAGTAGTNENGAGPSENGAGPSENGDRVTEENHTDE. The span at 288-300 shows a compositional bias: low complexity; it reads EAGTAGTNENGAG. The span at 311–323 shows a compositional bias: basic and acidic residues; the sequence is NGDRVTEENHTDE. An NAF domain is found at 322–346; sequence DEPTNLNAFDLIALSAGFDLAGLFG. The tract at residues 350–379 is PPI; the sequence is KRESRFTSQKPASVIISKLEEVAQRLKLSI. The interval 456-479 is disordered; the sequence is SQQETEYQQQQQQEQQEQEEPLKF. Over residues 457 to 470 the composition is skewed to low complexity; the sequence is QQETEYQQQQQQEQ.

Belongs to the protein kinase superfamily. CAMK Ser/Thr protein kinase family. SNF1 subfamily. In terms of assembly, interacts with CBL4/SOS3. The cofactor is Mn(2+). As to expression, mostly expressed in roots.

It catalyses the reaction L-seryl-[protein] + ATP = O-phospho-L-seryl-[protein] + ADP + H(+). The enzyme catalyses L-threonyl-[protein] + ATP = O-phospho-L-threonyl-[protein] + ADP + H(+). Functionally, CIPK serine-threonine protein kinases interact with CBL proteins. Binding of a CBL protein to the regulatory NAF domain of CIPK protein lead to the activation of the kinase in a calcium-dependent manner. This Arabidopsis thaliana (Mouse-ear cress) protein is CBL-interacting serine/threonine-protein kinase 10 (CIPK10).